Consider the following 398-residue polypeptide: Phosphoglycerate kinase (398 aa).

Residues 21–23 (DFN), Arg36, 59–62 (HLGR), Arg119, and Arg157 contribute to the substrate site. ATP is bound by residues Lys208, Gly296, Glu327, and 354–357 (GGDS).

It belongs to the phosphoglycerate kinase family. Monomer.

It is found in the cytoplasm. It catalyses the reaction (2R)-3-phosphoglycerate + ATP = (2R)-3-phospho-glyceroyl phosphate + ADP. Its pathway is carbohydrate degradation; glycolysis; pyruvate from D-glyceraldehyde 3-phosphate: step 2/5. This chain is Phosphoglycerate kinase (pgk), found in Lactococcus lactis subsp. lactis (strain IL1403) (Streptococcus lactis).